The primary structure comprises 686 residues: Pentatricopeptide repeat-containing protein At4g08210 (686 aa).

PPR repeat units lie at residues 4-38 (DLKL…GISQ), 39-69 (NVFI…MSER), 70-104 (NIVT…EEEA), 106-140 (NEFM…NLRG), 141-171 (DVVL…ILRP), 172-206 (SSTS…NVVS), 207-236 (WNCL…GLVL), 237-271 (DGFA…GLES), 272-302 (SPFA…EKLA), 306-340 (SVAV…DLCF), 341-375 (DSYT…GYEL), 376-406 (DYIV…LPNK), 407-441 (DIIA…GLDA), 442-476 (DQFI…GYES), 477-507 (EPVT…MLER), 508-542 (DVVS…GIEP), 543-573 (NKVT…MKSE), and 579-609 (YLEH…MPLE). Residues 614-686 (IWTSLLTACG…AKESGMSWII (73 aa)) are type E motif; degenerate.

Belongs to the PPR family. PCMP-E subfamily.

This chain is Pentatricopeptide repeat-containing protein At4g08210 (PCMP-E100), found in Arabidopsis thaliana (Mouse-ear cress).